Reading from the N-terminus, the 544-residue chain is Chaperonin GroEL (544 aa).

ATP is bound by residues threonine 30 to proline 33, lysine 51, aspartate 87 to threonine 91, glycine 415, asparagine 479 to alanine 481, and aspartate 495.

It belongs to the chaperonin (HSP60) family. Forms a cylinder of 14 subunits composed of two heptameric rings stacked back-to-back. Interacts with the co-chaperonin GroES.

The protein resides in the cytoplasm. The catalysed reaction is ATP + H2O + a folded polypeptide = ADP + phosphate + an unfolded polypeptide.. Together with its co-chaperonin GroES, plays an essential role in assisting protein folding. The GroEL-GroES system forms a nano-cage that allows encapsulation of the non-native substrate proteins and provides a physical environment optimized to promote and accelerate protein folding. The polypeptide is Chaperonin GroEL (Francisella tularensis subsp. tularensis (strain WY96-3418)).